The sequence spans 63 residues: Large ribosomal subunit protein bL28 (63 aa).

It belongs to the bacterial ribosomal protein bL28 family.

This Selenomonas ruminantium protein is Large ribosomal subunit protein bL28 (rpmB).